We begin with the raw amino-acid sequence, 443 residues long: MSRADTIFALSTPMGKSGVAVIRVSGHDALKSMQLLGVKEPVRSRVATCKTLYDKKRQPIDQAVVLYFPGPGSFTGEDVVELQVHGSLAVIRLLFEELQTVFRIAEPGEFSLRAFLNGKIDLTRAEGIADLVNSETEAQLRQAFAQSSGFLERLYEEWRSSLVDILSDLEAYIDFPDDVSPQILRSVHDRVKELHNSLERHLDDGHRGERLRHGMRVAILGKPNVGKSTLFNHLARRDMAIVSEYPGTTRDVLEAHVDIGGYPFIVVDTAGIRESTDFVEREGIMRAKSEAATADIRIMLFPHSEAGNLGVHEAIEGGDDGKTIYVLSKADSAKEGETRIIEGKQFYLVSVHTNLGVDSLLSALKERAIDGFPKSGDVLITSQRHRGHLQSAAKVISDITDEMPAEIVAEYLRLATKEIGKVTGAVYGDDILDNIFKRFCIGK.

The (6S)-5-formyl-5,6,7,8-tetrahydrofolate site is built by Arg-23, Glu-81, and Lys-119. Residues 214-369 (GMRVAILGKP…LLSALKERAI (156 aa)) enclose the TrmE-type G domain. GTP is bound by residues 224–229 (NVGKST), 243–249 (SEYPGTT), and 268–271 (DTAG). Residues Ser-228 and Thr-249 each coordinate Mg(2+). A (6S)-5-formyl-5,6,7,8-tetrahydrofolate-binding site is contributed by Lys-443.

This sequence belongs to the TRAFAC class TrmE-Era-EngA-EngB-Septin-like GTPase superfamily. TrmE GTPase family. In terms of assembly, homodimer. Heterotetramer of two MnmE and two MnmG subunits. The cofactor is K(+).

The protein localises to the cytoplasm. In terms of biological role, exhibits a very high intrinsic GTPase hydrolysis rate. Involved in the addition of a carboxymethylaminomethyl (cmnm) group at the wobble position (U34) of certain tRNAs, forming tRNA-cmnm(5)s(2)U34. This chain is tRNA modification GTPase MnmE, found in Anaplasma marginale (strain St. Maries).